Consider the following 331-residue polypeptide: MEIINGPVLPRYAAPATGALTSDAKISGQLLRRVHLRRRACGLQGDHYRAARRFFGFPSERHARSGWVWPVCCSYGSSSDGDGAAAADYDASGEEFVNSSVMEAVELRSVSDGFVIKMRDGKNLRCVQNNPRVLRLRDSAPHHAIVLKMEDGSDLLLPIIVMETPSIMLLAALRNIRIPRPTIYNVVKEMTERMGYAVRLVRITEMVHDAYYSRLYLAKIGNEEETISLDLKPSDAINIAFRCKVPIQVNRRIAYNNGLKVVQPTPSESYVSSDQFQYTRLDRPDDQPCFEAQEFDLVRNMLVAAVEERYKDAAQYRDQLFMFRAKKKNMI.

Residues 126–261 (CVQNNPRVLR…RIAYNNGLKV (136 aa)) form the BFN domain. In terms of domain architecture, UVR spans 291-326 (EAQEFDLVRNMLVAAVEERYKDAAQYRDQLFMFRAK).

This sequence belongs to the bifunctional nuclease family.

Its subcellular location is the nucleus. In terms of biological role, bifunctional nuclease with both RNase and DNase activities. Involved in basal defense response. Participates in abscisic acid-derived callose deposition following infection by a necrotrophic pathogen. This is Bifunctional nuclease 1 (BBD1) from Oryza sativa subsp. japonica (Rice).